The following is a 90-amino-acid chain: DNA-directed RNA polymerase subunit omega (90 aa).

It belongs to the RNA polymerase subunit omega family. As to quaternary structure, the RNAP catalytic core consists of 2 alpha, 1 beta, 1 beta' and 1 omega subunit. When a sigma factor is associated with the core the holoenzyme is formed, which can initiate transcription.

The catalysed reaction is RNA(n) + a ribonucleoside 5'-triphosphate = RNA(n+1) + diphosphate. Promotes RNA polymerase assembly. Latches the N- and C-terminal regions of the beta' subunit thereby facilitating its interaction with the beta and alpha subunits. The sequence is that of DNA-directed RNA polymerase subunit omega from Rhodopirellula baltica (strain DSM 10527 / NCIMB 13988 / SH1).